A 284-amino-acid polypeptide reads, in one-letter code: P2R1A-PPP2R2A-interacting phosphatase regulator 1 (284 aa).

Disordered regions lie at residues 1-32 (MAQEKMELDLELPPGSAAAPSDGGGLRRSNSA), 112-198 (EESL…PIKR), and 235-284 (AHTL…LPID). 2 stretches are compositionally biased toward low complexity: residues 152–164 (SPSLQSLVSSSGL) and 172–184 (PTRRFSSRRSQSP). Polar residues predominate over residues 258–269 (STGSPVSLSDSR).

This sequence belongs to the FAM122 family.

The protein localises to the nucleus. The protein resides in the cytoplasm. Functionally, acts as an inhibitor of serine/threonine-protein phosphatase 2A (PP2A) activity. Potentiates ubiquitin-mediated proteasomal degradation of serine/threonine-protein phosphatase 2A catalytic subunit alpha (PPP2CA). Inhibits PP2A-mediated dephosphorylation of WEE1, promoting ubiquitin-mediated proteolysis of WEE1, thereby releasing G2/M checkpoint. The sequence is that of P2R1A-PPP2R2A-interacting phosphatase regulator 1 from Gallus gallus (Chicken).